The chain runs to 373 residues: Centrosomal protein of 41 kDa (373 aa).

A disordered region spans residues 91-137; it reads LEDNDSATSEADAEIAAKTNGKGSPEEQSPSPVQFINSTGAGDSSRS. S96 and S99 each carry phosphoserine. At T109 the chain carries Phosphothreonine. 2 positions are modified to phosphoserine: S114 and S121. Over residues 116 to 137 the composition is skewed to polar residues; it reads EEQSPSPVQFINSTGAGDSSRS. In terms of domain architecture, Rhodanese spans 169-266; sequence PDCPFLLLDV…LAQKFPEGLV (98 aa). Residues 317–373 are disordered; that stretch reads DQGPADNPSRLNQNNSAGKDSKVAACRGGQNLPTSCPASHSSPRTLTSGHLQGKPWK. Positions 325 to 334 are enriched in polar residues; that stretch reads SRLNQNNSAG. At R343 the chain carries Omega-N-methylarginine. The span at 347–366 shows a compositional bias: polar residues; that stretch reads NLPTSCPASHSSPRTLTSGH.

It belongs to the CEP41 family. In terms of assembly, found in a complex with TTLL6.

It localises to the cytoplasm. It is found in the cytoskeleton. Its subcellular location is the microtubule organizing center. The protein resides in the centrosome. The protein localises to the cell projection. It localises to the cilium. It is found in the cilium basal body. Functionally, required during ciliogenesis for tubulin glutamylation in cilium. Probably acts by participating in the transport of TTLL6, a tubulin polyglutamylase, between the basal body and the cilium. The protein is Centrosomal protein of 41 kDa (Cep41) of Mus musculus (Mouse).